A 460-amino-acid chain; its full sequence is Cysteine--tRNA ligase (460 aa).

Cys-29 provides a ligand contact to Zn(2+). Residues 31 to 41 (ATPQSSPHIGH) carry the 'HIGH' region motif. Cys-212, His-237, and Glu-241 together coordinate Zn(2+). Residues 268 to 272 (KMSKS) carry the 'KMSKS' region motif. Lys-271 is an ATP binding site.

This sequence belongs to the class-I aminoacyl-tRNA synthetase family. Monomer. It depends on Zn(2+) as a cofactor.

It localises to the cytoplasm. It catalyses the reaction tRNA(Cys) + L-cysteine + ATP = L-cysteinyl-tRNA(Cys) + AMP + diphosphate. This chain is Cysteine--tRNA ligase, found in Corynebacterium glutamicum (strain ATCC 13032 / DSM 20300 / JCM 1318 / BCRC 11384 / CCUG 27702 / LMG 3730 / NBRC 12168 / NCIMB 10025 / NRRL B-2784 / 534).